The chain runs to 317 residues: uncharacterized protein (317 aa).

Low complexity predominate over residues 68 to 78; that stretch reads DSTNTDISNET. The interval 68-87 is disordered; that stretch reads DSTNTDISNETPILSNNTPI.

This is an uncharacterized protein from Methanocaldococcus jannaschii (strain ATCC 43067 / DSM 2661 / JAL-1 / JCM 10045 / NBRC 100440) (Methanococcus jannaschii).